We begin with the raw amino-acid sequence, 324 residues long: UDP-N-acetylenolpyruvoylglucosamine reductase (324 aa).

Positions 36–203 constitute an FAD-binding PCMH-type domain; that stretch reads FRAGGLAELM…TSVLFEGYPE (168 aa). Arginine 183 is a catalytic residue. The active-site Proton donor is serine 232. Glutamate 302 is an active-site residue.

This sequence belongs to the MurB family. It depends on FAD as a cofactor.

The protein resides in the cytoplasm. It catalyses the reaction UDP-N-acetyl-alpha-D-muramate + NADP(+) = UDP-N-acetyl-3-O-(1-carboxyvinyl)-alpha-D-glucosamine + NADPH + H(+). It participates in cell wall biogenesis; peptidoglycan biosynthesis. Functionally, cell wall formation. In Rhizobium johnstonii (strain DSM 114642 / LMG 32736 / 3841) (Rhizobium leguminosarum bv. viciae), this protein is UDP-N-acetylenolpyruvoylglucosamine reductase.